Consider the following 501-residue polypeptide: Nuclear receptor subfamily 5 group A member 2 (501 aa).

The nuclear receptor DNA-binding region spans 43-114 (EELCPVCGDK…KCLSVGMKLE (72 aa)). Zn(2+)-binding residues include Cys-46, Cys-49, Cys-63, Cys-66, Cys-82, Cys-88, Cys-98, and Cys-101. 2 consecutive NR C4-type zinc fingers follow at residues 46 to 66 (CPVC…CESC) and 82 to 106 (CIEN…FQKC). A C-terminal extension (CTE) region spans residues 112 to 127 (KLEAVRADRMRGGRNK). The FTZ-F1 box motif lies at 128 to 147 (FGPMYKRDRALKQQKKALIR). The interval 186–207 (NHTALPPTDYDRSPFVTSPISM) is disordered. The 240-residue stretch at 260-499 (SIPHLILELQ…NLLIEMLHAK (240 aa)) folds into the NR LBD domain. A phospholipid derivative contacts are provided by residues 381–384 (GATL), Tyr-476, and Lys-480. The tract at residues 488 to 499 (CNNLLIEMLHAK) is AF-2.

It belongs to the nuclear hormone receptor family. NR5 subfamily. As to quaternary structure, monomer; Binds DNA as a monomer. As to expression, detected in liver and adrenal gland.

The protein resides in the nucleus. The protein localises to the chromosome. Functionally, orphan nuclear receptor that binds DNA as a monomer to the 5'-TCAAGGCCA-3' sequence and controls expression of target genes: regulates key biological processes, such as cholesterol and bile acid synthesis pathways, as well as cartilage, liver and pancreas morphogenesis. Ligand-binding causes conformational change which causes recruitment of coactivators, promoting target gene activation. The specific ligand is unknown, but specific phospholipids, such as phosphatidylethanolamine, phosphatidylserine, dilauroyl phosphatidylcholine and diundecanoyl phosphatidylcholine can act as ligand in vitro. Acts as a pioneer transcription factor, which unwraps target DNA from histones and elicits local opening of closed chromatin. Involved in the formation of connective tissue in lower jaw. This is Nuclear receptor subfamily 5 group A member 2 from Gallus gallus (Chicken).